Reading from the N-terminus, the 219-residue chain is Adenylate kinase (219 aa).

An ATP-binding site is contributed by 13 to 18 (GAGKGT). The NMP stretch occupies residues 33-62 (STGDIFRAAIKNETKMGLEAKKYIDAGNLV). AMP contacts are provided by residues Thr34, Arg39, 60–62 (NLV), 88–91 (GYPR), and Gln95. Residues 129-167 (GRFICRTCGATYHKLYNKPKVEGTCDVCGGHDFYQRDDD) form an LID region. Arg130 serves as a coordination point for ATP. Zn(2+)-binding residues include Cys133 and Cys136. 139–140 (TY) is a binding site for ATP. Zn(2+) contacts are provided by Cys153 and Cys156. Residues Arg164 and Arg175 each contribute to the AMP site. Arg203 provides a ligand contact to ATP.

The protein belongs to the adenylate kinase family. As to quaternary structure, monomer.

It localises to the cytoplasm. It carries out the reaction AMP + ATP = 2 ADP. Its pathway is purine metabolism; AMP biosynthesis via salvage pathway; AMP from ADP: step 1/1. Catalyzes the reversible transfer of the terminal phosphate group between ATP and AMP. Plays an important role in cellular energy homeostasis and in adenine nucleotide metabolism. This chain is Adenylate kinase, found in Lactiplantibacillus plantarum (strain ATCC BAA-793 / NCIMB 8826 / WCFS1) (Lactobacillus plantarum).